A 268-amino-acid polypeptide reads, in one-letter code: Glucosamine-6-phosphate deaminase (268 aa).

Asp-72 acts as the Proton acceptor; for enolization step in catalysis. The active-site For ring-opening step is the Asp-141. His-143 serves as the catalytic Proton acceptor; for ring-opening step. Glu-148 functions as the For ring-opening step in the catalytic mechanism.

This sequence belongs to the glucosamine/galactosamine-6-phosphate isomerase family. NagB subfamily. In terms of assembly, homohexamer.

The catalysed reaction is alpha-D-glucosamine 6-phosphate + H2O = beta-D-fructose 6-phosphate + NH4(+). It functions in the pathway amino-sugar metabolism; N-acetylneuraminate degradation; D-fructose 6-phosphate from N-acetylneuraminate: step 5/5. Its activity is regulated as follows. Allosterically activated by N-acetylglucosamine 6-phosphate (GlcNAc6P). Functionally, catalyzes the reversible isomerization-deamination of glucosamine 6-phosphate (GlcN6P) to form fructose 6-phosphate (Fru6P) and ammonium ion. This Proteus mirabilis (strain HI4320) protein is Glucosamine-6-phosphate deaminase.